Here is a 204-residue protein sequence, read N- to C-terminus: GTP cyclohydrolase 1 (204 aa).

3 residues coordinate Zn(2+): C92, H95, and C165.

The protein belongs to the GTP cyclohydrolase I family. Homomer.

It carries out the reaction GTP + H2O = 7,8-dihydroneopterin 3'-triphosphate + formate + H(+). Its pathway is cofactor biosynthesis; 7,8-dihydroneopterin triphosphate biosynthesis; 7,8-dihydroneopterin triphosphate from GTP: step 1/1. The protein is GTP cyclohydrolase 1 of Mycobacterium avium (strain 104).